The chain runs to 89 residues: Small ribosomal subunit protein uS14A (89 aa).

Belongs to the universal ribosomal protein uS14 family. As to quaternary structure, part of the 30S ribosomal subunit. Contacts proteins S3 and S10.

In terms of biological role, binds 16S rRNA, required for the assembly of 30S particles and may also be responsible for determining the conformation of the 16S rRNA at the A site. The chain is Small ribosomal subunit protein uS14A from Listeria welshimeri serovar 6b (strain ATCC 35897 / DSM 20650 / CCUG 15529 / CIP 8149 / NCTC 11857 / SLCC 5334 / V8).